A 231-amino-acid polypeptide reads, in one-letter code: NADH-ubiquinone oxidoreductase chain 4 (231 aa).

7 helical membrane passes run 1 to 21, 34 to 54, 63 to 85, 89 to 111, 128 to 148, 169 to 189, and 211 to 231; these read PIAG…YGII, MFLP…LTCL, IAYS…TPWG, AMAL…NTTY, ILPM…ATPP, TIIL…HMFL, and LLMT…ELVI.

The protein belongs to the complex I subunit 4 family.

It localises to the mitochondrion membrane. It carries out the reaction a ubiquinone + NADH + 5 H(+)(in) = a ubiquinol + NAD(+) + 4 H(+)(out). Core subunit of the mitochondrial membrane respiratory chain NADH dehydrogenase (Complex I) that is believed to belong to the minimal assembly required for catalysis. Complex I functions in the transfer of electrons from NADH to the respiratory chain. The immediate electron acceptor for the enzyme is believed to be ubiquinone. The polypeptide is NADH-ubiquinone oxidoreductase chain 4 (MT-ND4) (Porthidium ophryomegas (Slender hognose viper)).